Here is a 286-residue protein sequence, read N- to C-terminus: Release factor glutamine methyltransferase (286 aa).

S-adenosyl-L-methionine-binding positions include 120-124 (GTGSG), D143, W172, and N187. A substrate-binding site is contributed by 187–190 (NPPY).

It belongs to the protein N5-glutamine methyltransferase family. PrmC subfamily.

The catalysed reaction is L-glutaminyl-[peptide chain release factor] + S-adenosyl-L-methionine = N(5)-methyl-L-glutaminyl-[peptide chain release factor] + S-adenosyl-L-homocysteine + H(+). Its function is as follows. Methylates the class 1 translation termination release factors RF1/PrfA and RF2/PrfB on the glutamine residue of the universally conserved GGQ motif. In Gloeobacter violaceus (strain ATCC 29082 / PCC 7421), this protein is Release factor glutamine methyltransferase.